The following is a 327-amino-acid chain: Protoheme IX farnesyltransferase (327 aa).

8 helical membrane-spanning segments follow: residues 35–55, 60–80, 106–126, 129–149, 157–177, 185–205, 234–254, and 283–303; these read LIPLLLATTLGGMALSEGWPL, LVCTLGGGALASAAAGVLNCL, SAFIGAIACTLAAAMLLVSGV, LAAGLSLLGLCSYVLLYTALL, IVIGGVAGAIPPLVGAAAATG, WLFALVMVWTPAHFWALALLL, GWITVLLSSLGVFALPSGGAF, and AKALFRWSILYLFGVCLLLIL.

This sequence belongs to the UbiA prenyltransferase family. Protoheme IX farnesyltransferase subfamily.

The protein localises to the cell inner membrane. The catalysed reaction is heme b + (2E,6E)-farnesyl diphosphate + H2O = Fe(II)-heme o + diphosphate. It participates in porphyrin-containing compound metabolism; heme O biosynthesis; heme O from protoheme: step 1/1. Functionally, converts heme B (protoheme IX) to heme O by substitution of the vinyl group on carbon 2 of heme B porphyrin ring with a hydroxyethyl farnesyl side group. This chain is Protoheme IX farnesyltransferase, found in Synechococcus sp. (strain CC9605).